Reading from the N-terminus, the 187-residue chain is GTP cyclohydrolase 1 (187 aa).

Zn(2+) is bound by residues cysteine 78, histidine 81, and cysteine 149.

This sequence belongs to the GTP cyclohydrolase I family. Toroid-shaped homodecamer, composed of two pentamers of five dimers.

It catalyses the reaction GTP + H2O = 7,8-dihydroneopterin 3'-triphosphate + formate + H(+). The protein operates within cofactor biosynthesis; 7,8-dihydroneopterin triphosphate biosynthesis; 7,8-dihydroneopterin triphosphate from GTP: step 1/1. This Wolinella succinogenes (strain ATCC 29543 / DSM 1740 / CCUG 13145 / JCM 31913 / LMG 7466 / NCTC 11488 / FDC 602W) (Vibrio succinogenes) protein is GTP cyclohydrolase 1.